Here is a 144-residue protein sequence, read N- to C-terminus: Small ribosomal subunit protein eS19A (144 aa).

A disordered region spans residues 83–102 (VNRGMRPSHHRDGSGSVQRK).

This sequence belongs to the eukaryotic ribosomal protein eS19 family. In terms of assembly, component of the small ribosomal subunit (SSU). Mature yeast ribosomes consist of a small (40S) and a large (60S) subunit. The 40S small subunit contains 1 molecule of ribosomal RNA (18S rRNA) and at least 33 different proteins. The large 60S subunit contains 3 rRNA molecules (25S, 5.8S and 5S rRNA) and at least 46 different proteins.

Its subcellular location is the cytoplasm. It localises to the nucleus. The protein resides in the nucleolus. In terms of biological role, component of the ribosome, a large ribonucleoprotein complex responsible for the synthesis of proteins in the cell. The small ribosomal subunit (SSU) binds messenger RNAs (mRNAs) and translates the encoded message by selecting cognate aminoacyl-transfer RNA (tRNA) molecules. The large subunit (LSU) contains the ribosomal catalytic site termed the peptidyl transferase center (PTC), which catalyzes the formation of peptide bonds, thereby polymerizing the amino acids delivered by tRNAs into a polypeptide chain. The nascent polypeptides leave the ribosome through a tunnel in the LSU and interact with protein factors that function in enzymatic processing, targeting, and the membrane insertion of nascent chains at the exit of the ribosomal tunnel. eS19 is required for proper maturation of the small (40S) ribosomal subunit. Binds to 40S pre-ribosomal particles, probably required after association of NOC4 but before association of ENP1, TSR1 and RIO2 with 20/21S pre-rRNA. The chain is Small ribosomal subunit protein eS19A (rps1901) from Schizosaccharomyces pombe (strain 972 / ATCC 24843) (Fission yeast).